Here is a 934-residue protein sequence, read N- to C-terminus: MEDFKDFTEVTQFTNVQYLGCSQLVNNDNDNEMKALMKVLDEQKGAQTINVTLVVPHNISGTVKLIDAQGKVLSSFSLVNIRFCIRGESSTSQNNCFGISFTHKISVGEHNSSDILHQCHVFRTSKAETAAKALYSFSYAFSNKNVSSESNRLEFQFESILEVKENDGTVEKPSWKLCPQHNGVFKVRRDREKKIVVQLRQIDGFLLNIKKCFGMLLAAGRNLRHSDLQLLEMDRNATGTDSAVFVIEANWDPRVHMFEVLNTETPRDTRVFMTVAIDVIVSEISEPIRFSMEAMSRVFHEHERFYKTPQTVVSEEFTLVLEKSCDQSDPNDRKLTFISLESDSDRKRSKQNLGKSPSRMPTQLLHPTGDDESDCDEPLLSGSGKVSQECKEEHLEMWDQLIENWDQQSDRPQKISELVLDGIPDKLRGRVWQLLSNVRILAIDQPDLVEKYHIFLSQPCPSEQVIMRDIHRTFPAHDYFKESQGKGQQSLYKISKVYSLYDEEVSYCQGLSFLAASLLLHMPEEQAFCTLVKIMFNYGLRDLFKLGFDNLHLRFFQLTALLKDYIPDLSHHLEHIGIETHMYASQWFLTLFTAKFPLQMVFFILDLFLSQGMNTIFHISLALLDDAKTDLLQLDFEGTLKYFRVSLPRKYRTEASTKCLIHKAVKFRLNHSKLEVYENEYKRIKELERENEDPVLRMEKEIGRHQANTLRLERENDDLAHELVTSKIELRRKLDVAEDQIETSANAIERLTRQNMDILEENKNLMREYEQIKEMYRRDVLRLEENGSRAEKLLAEYKKLFSERSKRAENEREHFEVQKKAIIARISDCDKCWPAVCEWEKNRSPVHSASTPTGPDLLTKLEEREDHIKNLEIDLAQTKLSLVEAECRNQDLTHQLMAQSESDGKKWFKKTITQLKEVGSSLKHHERSNSSVTP.

The PID domain maps to 16–134 (VQYLGCSQLV…SKAETAAKAL (119 aa)). Positions 337-383 (FISLESDSDRKRSKQNLGKSPSRMPTQLLHPTGDDESDCDEPLLSGS) are disordered. Residues 351-361 (QNLGKSPSRMP) are compositionally biased toward polar residues. Positions 422–612 (GIPDKLRGRV…FILDLFLSQG (191 aa)) constitute a Rab-GAP TBC domain. Coiled-coil stretches lie at residues 727–800 (KIEL…YKKL) and 861–895 (LEER…LTHQ).

Functionally, rab GTPase activating protein for the small GTPases rab-6.1 and rab-6.2. Probably acts through rab-6.1 and rab-6.2 to play a role in microRNA-mediated gene silencing in different tissue types. Required for seam cell division and alae formation. This is Rab GTPase-activating protein tbc-11 from Caenorhabditis elegans.